A 163-amino-acid polypeptide reads, in one-letter code: Nucleotide-binding protein YajQ (163 aa).

It belongs to the YajQ family.

Its function is as follows. Nucleotide-binding protein. This Escherichia coli O127:H6 (strain E2348/69 / EPEC) protein is Nucleotide-binding protein YajQ.